We begin with the raw amino-acid sequence, 354 residues long: MNECHYDKRMDFFYNRSNTDTADEWTGTKLVIVLCVGTFFCLFIFFSNSLVIAAVITNRKFHFPFYYLLANLAAADFFAGIAYVFLMFNTGPVSKTLTVNRWLLRQGLLDTSLTASLANLLVIAVERHMSIMRMRIHSNLTKKRVTLLILLVWAIAIFMGAVPTLGWNCLCNISACSSLAPIYSRSYLIFWTVSNLLAFFIMVVVYVRIYMYVKRKTNVLSPHTSGSISRRRAPMKLMKTVMTVLGAFVVCWTPGLVVLLLDGLNCKQCNVQHVKRWFLLLALLNSVMNPIIYSYKDEDMYNTMRKMICCAPHDSNAERHPSRIPSTIHSRSDTGSQYLEDSISQGQVCNKSSS.

Over 1–31 (MNECHYDKRMDFFYNRSNTDTADEWTGTKLV) the chain is Extracellular. A glycan (N-linked (GlcNAc...) asparagine) is linked at Asn-15. A helical membrane pass occupies residues 32 to 52 (IVLCVGTFFCLFIFFSNSLVI). Residues 53 to 67 (AAVITNRKFHFPFYY) are Cytoplasmic-facing. A helical membrane pass occupies residues 68–88 (LLANLAAADFFAGIAYVFLMF). Over 89–101 (NTGPVSKTLTVNR) the chain is Extracellular. Residues 102-124 (WLLRQGLLDTSLTASLANLLVIA) form a helical membrane-spanning segment. At 125–146 (VERHMSIMRMRIHSNLTKKRVT) the chain is on the cytoplasmic side. Residues 147–167 (LLILLVWAIAIFMGAVPTLGW) form a helical membrane-spanning segment. Residues 168–186 (NCLCNISACSSLAPIYSRS) lie on the Extracellular side of the membrane. Asn-172 is a glycosylation site (N-linked (GlcNAc...) asparagine). The helical transmembrane segment at 187 to 207 (YLIFWTVSNLLAFFIMVVVYV) threads the bilayer. Over 208–240 (RIYMYVKRKTNVLSPHTSGSISRRRAPMKLMKT) the chain is Cytoplasmic. The helical transmembrane segment at 241 to 261 (VMTVLGAFVVCWTPGLVVLLL) threads the bilayer. Residues 262-276 (DGLNCKQCNVQHVKR) lie on the Extracellular side of the membrane. The helical transmembrane segment at 277–295 (WFLLLALLNSVMNPIIYSY) threads the bilayer. Over 296–354 (KDEDMYNTMRKMICCAPHDSNAERHPSRIPSTIHSRSDTGSQYLEDSISQGQVCNKSSS) the chain is Cytoplasmic. Cys-309 is lipidated: S-palmitoyl cysteine.

The protein belongs to the G-protein coupled receptor 1 family.

Its subcellular location is the cell membrane. Receptor for lysophosphatidic acid (LPA), a mediator of diverse cellular activities. Seems to be coupled to the G(i)/G(o) and G(q) families of heteromeric G proteins. The protein is Lysophosphatidic acid receptor 3 (Lpar3) of Rattus norvegicus (Rat).